Consider the following 959-residue polypeptide: Isoleucine--tRNA ligase (959 aa).

The 'HIGH' region motif lies at 60–70; that stretch reads PYANGSLHIGH. Glutamate 571 is a binding site for L-isoleucyl-5'-AMP. A 'KMSKS' region motif is present at residues 612–616; that stretch reads KMSKS. Residue lysine 615 coordinates ATP. 4 residues coordinate Zn(2+): cysteine 928, cysteine 931, cysteine 948, and cysteine 951.

This sequence belongs to the class-I aminoacyl-tRNA synthetase family. IleS type 1 subfamily. Monomer. Zn(2+) is required as a cofactor.

The protein localises to the cytoplasm. The catalysed reaction is tRNA(Ile) + L-isoleucine + ATP = L-isoleucyl-tRNA(Ile) + AMP + diphosphate. Functionally, catalyzes the attachment of isoleucine to tRNA(Ile). As IleRS can inadvertently accommodate and process structurally similar amino acids such as valine, to avoid such errors it has two additional distinct tRNA(Ile)-dependent editing activities. One activity is designated as 'pretransfer' editing and involves the hydrolysis of activated Val-AMP. The other activity is designated 'posttransfer' editing and involves deacylation of mischarged Val-tRNA(Ile). In Nostoc punctiforme (strain ATCC 29133 / PCC 73102), this protein is Isoleucine--tRNA ligase.